A 493-amino-acid chain; its full sequence is Voltage-gated potassium channel regulatory subunit KCNF1 (493 aa).

The Cytoplasmic segment spans residues 1 to 183 (MDASAEQSLP…KPESSCPARV (183 aa)). Residues 184 to 204 (VAVLSFLLILVSSVVMCMGTI) traverse the membrane as a helical segment. Residues 205–223 (PELQVVDSEGNRVEHPTLE) are Extracellular-facing. A helical membrane pass occupies residues 224 to 244 (NVETACIGWFTLEYLLRLFSS). At 245-249 (PNKLH) the chain is on the cytoplasmic side. Residues 250–270 (FALSFMNIVDVLAILPFYVSL) form a helical membrane-spanning segment. Topologically, residues 271–289 (TLTHLGARMMELTNVQQAV) are extracellular. A helical; Voltage-sensor transmembrane segment spans residues 290-310 (QALRIMRIARIFKLARHSSGL). At 311-324 (QTLTYALKRSFKEL) the chain is on the cytoplasmic side. The chain crosses the membrane as a helical span at residues 325 to 345 (GLLLMYLAVGIFVFSALGYTM). Residues 346-357 (EQSHPETLFKSI) are Extracellular-facing. The segment at residues 358-378 (PQSFWWAIITMTTVGYGDIYP) is an intramembrane region (pore-forming). The short motif at 370-375 (TVGYGD) is the Selectivity filter element. At 379–385 (KTTLGKL) the chain is on the extracellular side. The helical transmembrane segment at 386-406 (NAAISFLCGVIAIALPIHPII) threads the bilayer. Residues 407 to 493 (NNFVRYYNKQ…HHRTRLQSCK (87 aa)) lie on the Cytoplasmic side of the membrane. The disordered stretch occupies residues 433–468 (NSSSAESKPGGSRSDLDTLPPEPAAREGPSWGSRLK).

It belongs to the potassium channel family. F (TC 1.A.1.2) subfamily. Kv5.1/KCNF1 sub-subfamily. As to quaternary structure, heterotetramer with KCNB1 or KCNB2. As to expression, expressed in brain namely in the piriform cortex, olfactory tubercle, and medial habenular nucleus. Also expressed in the medial amygdaloid nuclei and the lateral amygdaloid area.

The protein resides in the cell membrane. Functionally, regulatory alpha-subunit of the voltage-gated potassium (Kv) channel which, when coassembled with KCNB1 or KCNB2, can modulate their expression and their gating kinetics by acting on deactivation upon repolarization and inactivation during maintained depolarization. Accelerates inactivation but has relatively little effect on deactivation. Coexpression with KCNB1 or KCNB2 markedly slows inactivation. Each modulatory subunit has its own specific properties of regulation, and can lead to extensive inhibitions, to large changes in kinetics, and/or to large shifts in the voltage dependencies of the inactivation process. The gating kinetics depends on the nature and stoichiometry of the associated regulatory sunbunit. Fails to produce a potassium current when expressed alone. This chain is Voltage-gated potassium channel regulatory subunit KCNF1, found in Rattus norvegicus (Rat).